The following is a 338-amino-acid chain: Lumican (338 aa).

A signal peptide spans 1–18 (MNVCTFTLVLALVGSVSG). Residue glutamine 19 is modified to Pyrrolidone carboxylic acid. Residues tyrosine 20, tyrosine 21, tyrosine 23, and tyrosine 30 each carry the sulfotyrosine modification. The 39-residue stretch at 28–66 (FMYGELSPNCAPECNCPHSYPTAMYCDDLKLKSVPMVPP) folds into the LRRNT domain. LRR repeat units follow at residues 67–88 (GIKY…AFEN), 91–114 (DLQW…VFSK), 117–137 (QLKK…PLPK), 138–159 (SLQD…DGLV), 160–181 (NLTF…ASLK), 185–205 (SLEY…GLPT), 206–227 (SLLT…YFNR), and 230–250 (GLQY…PGNS). Asparagine 88 carries an N-linked (GlcNAc...) (keratan sulfate) asparagine glycan. Residue asparagine 127 is glycosylated (N-linked (GlcNAc...) (keratan sulfate) asparagine). N-linked (GlcNAc...) (keratan sulfate) asparagine glycosylation is present at asparagine 160. N-linked (GlcNAc...) (keratan sulfate) asparagine glycosylation is present at asparagine 252. LRR repeat units follow at residues 255–276 (SLLE…NENL) and 277–296 (ENYY…SFCK). Cysteine 295 and cysteine 328 are joined by a disulfide. Position 304 is a phosphoserine (serine 304). An LRR 11 repeat occupies 305-326 (KIKHLRLDGNPLTQSSLPPDMY).

Belongs to the small leucine-rich proteoglycan (SLRP) family. SLRP class II subfamily. In terms of assembly, binds to laminin. Post-translationally, contains keratan sulfate.

Its subcellular location is the secreted. The protein localises to the extracellular space. The protein resides in the extracellular matrix. This Rattus norvegicus (Rat) protein is Lumican (Lum).